Here is a 1274-residue protein sequence, read N- to C-terminus: Enamelin (1274 aa).

A signal peptide spans 1-38; sequence MLLLQCRNPTSPPKPCGLVPNVKMSLLVFLGLLGVSAA. Residues 103-115 are compositionally biased toward pro residues; that stretch reads PVPNGWQQPPMPN. Disordered stretches follow at residues 103–413, 476–610, 668–700, 712–734, and 753–814; these read PVPN…VGAN, IGAN…NNPN, PFQS…KHFP, LPPL…YGSR, and YIKS…EEMN. Residues 117 to 127 are compositionally biased toward polar residues; that stretch reads PSKTDQTQETA. Residues 128–142 show a composition bias toward low complexity; that stretch reads KPNQTNPQEPQPQKQ. N-linked (GlcNAc...) asparagine glycosylation is present at Asn-130. The span at 143–158 shows a compositional bias: basic and acidic residues; sequence PLKEPPNEAARAKDDA. The span at 174 to 185 shows a compositional bias: pro residues; the sequence is YPQPPWPIPQRG. Ser-196 and Ser-219 each carry phosphoserine. Basic and acidic residues predominate over residues 225–239; sequence DYEKPKEKDPPKPED. Positions 249–272 are enriched in polar residues; the sequence is ASTNSTVPDANATQSIPEGGNDTS. N-linked (GlcNAc...) asparagine glycans are attached at residues Asn-252, Asn-259, and Asn-269. A compositionally biased stretch (low complexity) spans 273 to 287; it reads PIGNTGPGPNAGNNP. Asn-300 carries an N-linked (GlcNAc...) asparagine glycan. A compositionally biased stretch (low complexity) spans 318 to 330; that stretch reads PNIYENYPYPNYP. Composition is skewed to polar residues over residues 331–344, 486–503, 522–549, and 565–574; these read SERQ…QGPR, SIGT…TNPA, TNPS…QASN, and VTVSHNMKTQ. Basic and acidic residues predominate over residues 575-587; sequence NPKEKSLGQKERT. Polar residues predominate over residues 588–598; the sequence is VTPTKDASNPW. The span at 715–727 shows a compositional bias: basic and acidic residues; that stretch reads LKEDYGRQDENLR. The segment covering 753-766 has biased composition (polar residues); the sequence is YIKSNPWDKSSPST. Residues 787-801 are compositionally biased toward acidic residues; it reads QYNEEDPIDPNEDES. Asn-1066 carries N-linked (GlcNAc...) asparagine glycosylation. 2 disordered regions span residues 1071–1097 and 1109–1128; these read KLTA…PYSG and SEAS…DLGG.

Post-translationally, phosphorylated by FAM20C in vitro. As to expression, expressed in developing teeth.

The protein localises to the secreted. Its subcellular location is the extracellular space. It localises to the extracellular matrix. Its function is as follows. Involved in the mineralization and structural organization of enamel. Involved in the extension of enamel during the secretory stage of dental enamel formation. In Mus musculus (Mouse), this protein is Enamelin (Enam).